The sequence spans 901 residues: Viral-enhancing factor (901 aa).

The Peptidase M60 domain maps to 27 to 330 (HRRTEVGVVL…IFTWLYNPQR (304 aa)). N65, N265, N339, N349, N540, N594, N595, N642, N683, and N698 each carry an N-linked (GlcNAc...) asparagine; by host glycan.

Involved in disruption of the peritrophic membrane and fusion of nucleocapsids with midgut cells. This is Viral-enhancing factor (VEF) from Trichoplusia ni (Cabbage looper).